We begin with the raw amino-acid sequence, 448 residues long: Putative sodium-coupled neutral amino acid transporter 11 (448 aa).

The tract at residues methionine 1–serine 20 is disordered. 11 consecutive transmembrane segments (helical) span residues valine 22–proline 42, methionine 52–valine 72, isoleucine 94–tyrosine 114, phenylalanine 143–alanine 163, leucine 165–valine 185, alanine 200–isoleucine 220, isoleucine 246–phenylalanine 266, threonine 286–valine 306, serine 324–tyrosine 344, cysteine 346–phenylalanine 366, and methionine 389–proline 409. 3 N-linked (GlcNAc...) asparagine glycosylation sites follow: asparagine 425, asparagine 440, and asparagine 444.

Belongs to the amino acid/polyamine transporter 2 family.

Its subcellular location is the membrane. Its function is as follows. Putative sodium-dependent amino acid/proton antiporter. The polypeptide is Putative sodium-coupled neutral amino acid transporter 11 (slc38a11) (Danio rerio (Zebrafish)).